A 1023-amino-acid polypeptide reads, in one-letter code: uncharacterized protein (1023 aa).

Residues M1–A35 are disordered. K17 bears the N6-acetyllysine mark. Phosphoserine occurs at positions 206 and 383. Disordered stretches follow at residues G381–D501, P518–S551, P703–H742, E907–A980, and K1002–L1023. The residue at position 389 (T389) is a Phosphothreonine. Positions P391–P400 are enriched in polar residues. Basic and acidic residues-rich tracts occupy residues R425 to E436, C443 to E454, and C477 to R490. Phosphoserine is present on residues S493 and S494. The segment covering A706–G722 has biased composition (pro residues). S912, S964, and S972 each carry phosphoserine. Over residues P963–S972 the composition is skewed to low complexity.

This is an uncharacterized protein from Mus musculus (Mouse).